The following is a 192-amino-acid chain: Protein A16 (192 aa).

The signal sequence occupies residues 1–22 (MLLANTAAAVLLLIVCIGASVG). The C-type lectin domain maps to 71 to 186 (KNKKFTIGTL…CLNPLNIFPY (116 aa)). An intrachain disulfide couples Cys-163 to Cys-177.

In terms of tissue distribution, expressed in the gut of adults.

This is Protein A16 (CTL3) from Anopheles gambiae (African malaria mosquito).